We begin with the raw amino-acid sequence, 72 residues long: SRY-related protein AES6 (72 aa).

Residues 1 to 69 (VKRPMNAFMV…KHMADYPDYK (69 aa)) constitute a DNA-binding region (HMG box).

It localises to the nucleus. The polypeptide is SRY-related protein AES6 (Alligator mississippiensis (American alligator)).